The chain runs to 384 residues: Actin-binding Rho-activating protein (384 aa).

Residues 1-11 (MARGEKGRGEG) are compositionally biased toward basic and acidic residues. Disordered stretches follow at residues 1-20 (MARG…LRKV), 32-159 (GWQQ…SPTR), and 181-211 (EQEE…EQDG). Polar residues predominate over residues 35 to 47 (QWANENSTRQAQE). A compositionally biased stretch (acidic residues) spans 134–145 (DGDEPEPEQPES). Serine 156 and serine 191 each carry phosphoserine. Actin-binding stretches follow at residues 202 to 302 (ETEE…AERA) and 303 to 384 (KRAE…TLLK). 2 interaction with actin regions span residues 243-288 (SQVG…GDEG) and 355-384 (MRAR…TLLK).

Binds F-actin and ABLIM1, ABLIM2 and ABLIM3. Interaction with ABLIM2 and ABLIM3 enhances activity. As to expression, specifically expressed in heart and skeletal muscles.

It is found in the cytoplasm. The protein resides in the myofibril. Its subcellular location is the sarcomere. The protein localises to the cytoskeleton. Its function is as follows. Acts as an activator of serum response factor (SRF)-dependent transcription possibly by inducing nuclear translocation of MKL1 or MKL2 and through a mechanism requiring Rho-actin signaling. The sequence is that of Actin-binding Rho-activating protein (ABRA) from Sus scrofa (Pig).